The chain runs to 305 residues: Homoserine O-acetyltransferase (305 aa).

Cys-142 serves as the catalytic Acyl-thioester intermediate. Lys-163 and Ser-192 together coordinate substrate. The active-site Proton acceptor is His-235. Residue Glu-237 is part of the active site. Arg-249 contacts substrate.

Belongs to the MetA family.

It localises to the cytoplasm. The catalysed reaction is L-homoserine + acetyl-CoA = O-acetyl-L-homoserine + CoA. Its pathway is amino-acid biosynthesis; L-methionine biosynthesis via de novo pathway; O-acetyl-L-homoserine from L-homoserine: step 1/1. Its function is as follows. Transfers an acetyl group from acetyl-CoA to L-homoserine, forming acetyl-L-homoserine. This is Homoserine O-acetyltransferase from Dinoroseobacter shibae (strain DSM 16493 / NCIMB 14021 / DFL 12).